Reading from the N-terminus, the 249-residue chain is Putative TrmH family tRNA/rRNA methyltransferase (249 aa).

S-adenosyl-L-methionine-binding residues include Gly-196, Ile-216, and Leu-225.

It belongs to the class IV-like SAM-binding methyltransferase superfamily. RNA methyltransferase TrmH family.

This Staphylococcus haemolyticus (strain JCSC1435) protein is Putative TrmH family tRNA/rRNA methyltransferase.